We begin with the raw amino-acid sequence, 133 residues long: Small ribosomal subunit protein uS8 (133 aa).

This sequence belongs to the universal ribosomal protein uS8 family. Part of the 30S ribosomal subunit.

Its function is as follows. One of the primary rRNA binding proteins, it binds directly to 16S rRNA central domain where it helps coordinate assembly of the platform of the 30S subunit. The chain is Small ribosomal subunit protein uS8 from Saccharolobus solfataricus (strain ATCC 35092 / DSM 1617 / JCM 11322 / P2) (Sulfolobus solfataricus).